We begin with the raw amino-acid sequence, 485 residues long: Glutamyl-tRNA(Gln) amidotransferase subunit A (485 aa).

Catalysis depends on charge relay system residues Lys78 and Ser153. Ser177 acts as the Acyl-ester intermediate in catalysis.

This sequence belongs to the amidase family. GatA subfamily. Heterotrimer of A, B and C subunits.

It catalyses the reaction L-glutamyl-tRNA(Gln) + L-glutamine + ATP + H2O = L-glutaminyl-tRNA(Gln) + L-glutamate + ADP + phosphate + H(+). Its function is as follows. Allows the formation of correctly charged Gln-tRNA(Gln) through the transamidation of misacylated Glu-tRNA(Gln) in organisms which lack glutaminyl-tRNA synthetase. The reaction takes place in the presence of glutamine and ATP through an activated gamma-phospho-Glu-tRNA(Gln). The chain is Glutamyl-tRNA(Gln) amidotransferase subunit A from Pelobacter propionicus (strain DSM 2379 / NBRC 103807 / OttBd1).